The sequence spans 122 residues: Small ribosomal subunit protein uS13 (122 aa).

Residues 97 to 114 (PVRGQRTHTNAKTRKGKS) show a composition bias toward basic residues. The disordered stretch occupies residues 97–122 (PVRGQRTHTNAKTRKGKSRLPIAGKE).

The protein belongs to the universal ribosomal protein uS13 family. As to quaternary structure, part of the 30S ribosomal subunit. Forms a loose heterodimer with protein S19. Forms two bridges to the 50S subunit in the 70S ribosome.

In terms of biological role, located at the top of the head of the 30S subunit, it contacts several helices of the 16S rRNA. In the 70S ribosome it contacts the 23S rRNA (bridge B1a) and protein L5 of the 50S subunit (bridge B1b), connecting the 2 subunits; these bridges are implicated in subunit movement. Contacts the tRNAs in the A and P-sites. The sequence is that of Small ribosomal subunit protein uS13 from Wolbachia sp. subsp. Brugia malayi (strain TRS).